Consider the following 385-residue polypeptide: Mannitol-1-phosphate 5-dehydrogenase (385 aa).

Residue Ala3 to Gly14 coordinates NAD(+).

This sequence belongs to the mannitol dehydrogenase family.

The catalysed reaction is D-mannitol 1-phosphate + NAD(+) = beta-D-fructose 6-phosphate + NADH + H(+). In Geobacillus thermodenitrificans (strain NG80-2), this protein is Mannitol-1-phosphate 5-dehydrogenase.